We begin with the raw amino-acid sequence, 531 residues long: Pyruvate kinase (531 aa).

Residue Arg-86 coordinates substrate. 4 residues coordinate K(+): Asn-88, Ser-90, Asp-121, and Thr-122. 88–91 (NFSH) serves as a coordination point for ATP. 2 residues coordinate ATP: Arg-128 and Lys-211. Glu-277 provides a ligand contact to Mg(2+). Substrate-binding residues include Gly-300, Asp-301, and Thr-333. Asp-301 contacts Mg(2+).

The protein belongs to the pyruvate kinase family. In terms of assembly, homotetramer. It depends on Mg(2+) as a cofactor. Requires K(+) as cofactor.

The enzyme catalyses pyruvate + ATP = phosphoenolpyruvate + ADP + H(+). Its pathway is carbohydrate degradation; glycolysis; pyruvate from D-glyceraldehyde 3-phosphate: step 5/5. The protein is Pyruvate kinase (PYK) of Eimeria tenella (Coccidian parasite).